Here is a 232-residue protein sequence, read N- to C-terminus: MGQKVHPNGIRLGIVKPWNSTWFANTKEFADNLDSDFKVRQFLTKELAKASVSRIVIERPAKSIRVTIHTARPGIVIGKKGEDVEKLRKVVADIAGVPAQINIAEVRKPELDAKLVADSITSQLERRVMFRRAMKRAVQNAMRLGAKGIKVEVSGRLGGAEIARTEWYREGRVPLHTLRADIDYNTSEAHTTYGVIGVKVWIFKGEILGGMAAVEQPEPAAQPKKQQRKGRK.

The region spanning 39–107 (VRQFLTKELA…PAQINIAEVR (69 aa)) is the KH type-2 domain.

This sequence belongs to the universal ribosomal protein uS3 family. Part of the 30S ribosomal subunit. Forms a tight complex with proteins S10 and S14.

Binds the lower part of the 30S subunit head. Binds mRNA in the 70S ribosome, positioning it for translation. The polypeptide is Small ribosomal subunit protein uS3 (Erwinia tasmaniensis (strain DSM 17950 / CFBP 7177 / CIP 109463 / NCPPB 4357 / Et1/99)).